The following is a 203-amino-acid chain: MSRTARVERVTKETKVLVEIDLDGSGKADIETGVGFYDHMLHQIARHGGFDLTVHTVGDLHIDAHHTMEDTALALGSAVDRALGDRAGIRRYGSATVPMDEVLVRAAVDISGRPYVVHDEPPLAPYIGPVYPTSMTRHVWESFGQSARVTLHVDVLRAARPGGHPDAHHVVEAQFKAVSRALREATAVDPRFTGVVPSTKGTL.

It belongs to the imidazoleglycerol-phosphate dehydratase family.

It is found in the cytoplasm. It carries out the reaction D-erythro-1-(imidazol-4-yl)glycerol 3-phosphate = 3-(imidazol-4-yl)-2-oxopropyl phosphate + H2O. Its pathway is amino-acid biosynthesis; L-histidine biosynthesis; L-histidine from 5-phospho-alpha-D-ribose 1-diphosphate: step 6/9. The polypeptide is Imidazoleglycerol-phosphate dehydratase (Salinispora tropica (strain ATCC BAA-916 / DSM 44818 / JCM 13857 / NBRC 105044 / CNB-440)).